A 147-amino-acid chain; its full sequence is Mediator of RNA polymerase II transcription subunit 10 (147 aa).

The protein belongs to the Mediator complex subunit 10 family. Component of the Mediator complex.

The protein localises to the nucleus. Its function is as follows. Component of the Mediator complex, a coactivator involved in the regulated transcription of nearly all RNA polymerase II-dependent genes. Mediator functions as a bridge to convey information from gene-specific regulatory proteins to the basal RNA polymerase II transcription machinery. Mediator is recruited to promoters by direct interactions with regulatory proteins and serves as a scaffold for the assembly of a functional preinitiation complex with RNA polymerase II and the general transcription factors. In Debaryomyces hansenii (strain ATCC 36239 / CBS 767 / BCRC 21394 / JCM 1990 / NBRC 0083 / IGC 2968) (Yeast), this protein is Mediator of RNA polymerase II transcription subunit 10 (NUT2).